We begin with the raw amino-acid sequence, 71 residues long: Protein CYSTEINE-RICH TRANSMEMBRANE MODULE 3 (71 aa).

The interval V30–G49 is disordered. The helical transmembrane segment at K48–C64 threads the bilayer.

The protein belongs to the CYSTM1 family. In terms of assembly, heterodimers. Interacts with CYSTM7 and WIH1/CYSTM13. In terms of tissue distribution, mostly expressed in leaves and flowers and, to a lower extent, in stems, siliques, shoots and roots.

Its subcellular location is the cell membrane. The protein resides in the cytoplasm. The protein localises to the mitochondrion. Negatively regulates salt stress responses and Na(+) homeostasis. Prevents Na(+) efflux, disturbs reactive oxygen species (ROS) homeostasis, and represses the expression of nuclear salt stress-responsive genes. Involved in resistance to abiotic stress. The chain is Protein CYSTEINE-RICH TRANSMEMBRANE MODULE 3 from Arabidopsis thaliana (Mouse-ear cress).